The chain runs to 850 residues: RPA-related protein RADX (850 aa).

The tract at residues 1–31 (MSGESGQPQPGPSHAGLYLEHPERDQAGVPG) is disordered. A DNA-binding region (OB) is located at residues 228 to 331 (WNSRKNFPAL…LISTMEICLN (104 aa)). 2 disordered regions span residues 575-612 (EAFWNASRPSTSQAAGKEDHCHERGSKRSQDDRPMGSQ) and 632-671 (GPSANPVPVPQPHSSAQMKGSKHNTPSQESSTAYTTGKSR). A compositionally biased stretch (basic and acidic residues) spans 590–608 (GKEDHCHERGSKRSQDDRP). Over residues 643 to 668 (PHSSAQMKGSKHNTPSQESSTAYTTG) the composition is skewed to polar residues.

It localises to the chromosome. Its function is as follows. Single-stranded DNA-binding protein recruited to replication forks to maintain genome stability. Prevents fork collapse by antagonizing the accumulation of RAD51 at forks to ensure the proper balance of fork remodeling and protection without interfering with the capacity of cells to complete homologous recombination of double-strand breaks. The polypeptide is RPA-related protein RADX (Mus musculus (Mouse)).